The chain runs to 297 residues: D-alanine--D-alanine ligase (297 aa).

The 191-residue stretch at 103-293 (KEILMHHRMP…FDSFVKSILE (191 aa)) folds into the ATP-grasp domain. 129 to 180 (ISFPVAVKPSSGGSSIATFKVKSLEELENAYQQASKHGEVMIEQWVTGKEIT) contacts ATP. Positions 247, 260, and 262 each coordinate Mg(2+).

It belongs to the D-alanine--D-alanine ligase family. Mg(2+) serves as cofactor. Requires Mn(2+) as cofactor.

The protein resides in the cytoplasm. It carries out the reaction 2 D-alanine + ATP = D-alanyl-D-alanine + ADP + phosphate + H(+). It functions in the pathway cell wall biogenesis; peptidoglycan biosynthesis. Its function is as follows. Cell wall formation. In Francisella philomiragia subsp. philomiragia (strain ATCC 25017 / CCUG 19701 / FSC 153 / O#319-036), this protein is D-alanine--D-alanine ligase.